We begin with the raw amino-acid sequence, 93 residues long: MDGIKYAVFTEKSIRLLGNNQYTSNVESGSTRTEIKHWVELFFGVKVIAMNSHRLPGKGRRMGPIMGHTMHYRRMIITLQPGYSIPPLIEKRT.

The protein belongs to the universal ribosomal protein uL23 family. In terms of assembly, part of the 50S ribosomal subunit.

It localises to the plastid. The protein localises to the chloroplast. Its function is as follows. Binds to 23S rRNA. In Drimys granadensis, this protein is Large ribosomal subunit protein uL23cz/uL23cy (rpl23-A).